The following is an 858-amino-acid chain: NEDD4-binding protein 1 (858 aa).

The segment at 17 to 37 (TCTEPPGGRQSPTASRAQPDS) is disordered. Positions 26-37 (QSPTASRAQPDS) are enriched in polar residues. A KH-like domain is found at 96–180 (KEDVYKAKEY…VQQFVALFQE (85 aa)). Disordered regions lie at residues 262-321 (EDKT…TWTV) and 388-424 (QKTQSTQGAQRTSRTPDPSPCANASSTSTSNRLKEKE). Over residues 285–316 (RSSESEQRDTKRQYSLERREEEQCEEREREPT) the composition is skewed to basic and acidic residues. Over residues 389–418 (KTQSTQGAQRTSRTPDPSPCANASSTSTSN) the composition is skewed to polar residues. Residues 598–750 (LRHIIIDGSN…LGKHGPHLDE (153 aa)) form the RNase NYN domain. The segment covering 774-784 (SVYSQAAQSTA) has biased composition (polar residues). The tract at residues 774-823 (SVYSQAAQSTAHPSSPSHWPHSGPPDWHLPRPSPSPPPQRSPSETTELKR) is disordered. Residues 785–799 (HPSSPSHWPHSGPPD) are compositionally biased toward low complexity. Positions 804–813 (RPSPSPPPQR) are enriched in pro residues. A coCUN region spans residues 813–858 (RSPSETTELKRKLYDIFPDQKQRIDRILSDNPYMRDLNALSGLLLG).

The protein belongs to the N4BP1 family.

The protein localises to the nucleus. It localises to the nucleolus. Its subcellular location is the PML body. Potent suppressor of cytokine production that acts as a regulator of innate immune signaling and inflammation. Acts as a key negative regulator of select cytokine and chemokine responses elicited by TRIF-independent Toll-like receptors (TLRs), thereby limiting inflammatory cytokine responses to minor insults. Has ribonuclease activity. In Danio rerio (Zebrafish), this protein is NEDD4-binding protein 1.